Consider the following 180-residue polypeptide: Large ribosomal subunit protein uL5 (180 aa).

It belongs to the universal ribosomal protein uL5 family. In terms of assembly, part of the 50S ribosomal subunit; part of the 5S rRNA/L5/L18/L25 subcomplex. Contacts the 5S rRNA and the P site tRNA. Forms a bridge to the 30S subunit in the 70S ribosome.

In terms of biological role, this is one of the proteins that bind and probably mediate the attachment of the 5S RNA into the large ribosomal subunit, where it forms part of the central protuberance. In the 70S ribosome it contacts protein S13 of the 30S subunit (bridge B1b), connecting the 2 subunits; this bridge is implicated in subunit movement. Contacts the P site tRNA; the 5S rRNA and some of its associated proteins might help stabilize positioning of ribosome-bound tRNAs. The protein is Large ribosomal subunit protein uL5 of Lactobacillus johnsonii (strain CNCM I-12250 / La1 / NCC 533).